We begin with the raw amino-acid sequence, 404 residues long: Demethylphylloquinone reductase NdbB (404 aa).

7–43 (RICILGGGFGGLYTALRLGQLSWEGHTPPEIVLVDQR) contributes to the FAD binding site. 159–195 (IRIAIVGGGYSGVELAAKLGDRLGERGRIRIIERGKE) serves as a coordination point for NADP(+).

This sequence belongs to the NADH dehydrogenase family. The cofactor is FAD.

It catalyses the reaction demethylphylloquinone + NADPH + H(+) = demethylphylloquinol + NADP(+). It participates in cofactor biosynthesis; phylloquinone biosynthesis. Its activity is regulated as follows. Inhibited by dicumarol. Bifunctional oxidoreductase probably ables to act both on prenyl naphthoquinones and on prenyl benzoquinones. Catalyzes the penultimate step in the biosynthesis of vitamin K1. This Synechocystis sp. (strain ATCC 27184 / PCC 6803 / Kazusa) protein is Demethylphylloquinone reductase NdbB.